Reading from the N-terminus, the 491-residue chain is uncharacterized protein (491 aa).

This is an uncharacterized protein from Schizosaccharomyces pombe (strain 972 / ATCC 24843) (Fission yeast).